The primary structure comprises 64 residues: MPKIKTNRGAAKRFKKTASGFKRKQAFKNHILTKKSSKTIRKLRPKQEVHENDVALVKRMMPYA.

Belongs to the bacterial ribosomal protein bL35 family.

In Alcanivorax borkumensis (strain ATCC 700651 / DSM 11573 / NCIMB 13689 / SK2), this protein is Large ribosomal subunit protein bL35.